The chain runs to 557 residues: Glutathione hydrolase proenzyme (557 aa).

The first 24 residues, 1-24, serve as a signal peptide directing secretion; the sequence is MQPVLFRTLSLGVAIAAASSSAFA. L-glutamate is bound at residue arginine 94. Threonine 364 functions as the Nucleophile in the catalytic mechanism. Residues threonine 382, asparagine 384, glutamate 403, aspartate 406, 435–436, and 456–457 contribute to the L-glutamate site; these read SS and GG.

It belongs to the gamma-glutamyltransferase family. This enzyme consists of two polypeptide chains, which are synthesized in precursor form from a single polypeptide. Cleaved by autocatalysis into a large and a small subunit.

The protein localises to the periplasm. The enzyme catalyses an N-terminal (5-L-glutamyl)-[peptide] + an alpha-amino acid = 5-L-glutamyl amino acid + an N-terminal L-alpha-aminoacyl-[peptide]. It carries out the reaction glutathione + H2O = L-cysteinylglycine + L-glutamate. It catalyses the reaction an S-substituted glutathione + H2O = an S-substituted L-cysteinylglycine + L-glutamate. It functions in the pathway sulfur metabolism; glutathione metabolism. This is Glutathione hydrolase proenzyme (ggt) from Pseudomonas aeruginosa (strain ATCC 15692 / DSM 22644 / CIP 104116 / JCM 14847 / LMG 12228 / 1C / PRS 101 / PAO1).